The primary structure comprises 236 residues: Phospholipid hydroperoxide glutathione peroxidase 1, chloroplastic (236 aa).

The segment covering 1–16 has biased composition (low complexity); that stretch reads MVSMTTSSSSYGTFST. A disordered region spans residues 1-24; that stretch reads MVSMTTSSSSYGTFSTVVNSSRPN. The N-terminal 64 residues, 1–64, are a transit peptide targeting the chloroplast; that stretch reads MVSMTTSSSS…PINPGFLFKS (64 aa). Cysteine 111 is an active-site residue.

Belongs to the glutathione peroxidase family. In terms of tissue distribution, expressed in leaves, stems, flowers, green siliques and seeds.

The protein localises to the plastid. The protein resides in the chloroplast. It catalyses the reaction a hydroperoxy polyunsaturated fatty acid + 2 glutathione = a hydroxy polyunsaturated fatty acid + glutathione disulfide + H2O. Protects cells and enzymes from oxidative damage, by catalyzing the reduction of hydrogen peroxide, lipid peroxides and organic hydroperoxide, by glutathione. This Arabidopsis thaliana (Mouse-ear cress) protein is Phospholipid hydroperoxide glutathione peroxidase 1, chloroplastic (GPX1).